Reading from the N-terminus, the 291-residue chain is MKLRRSMLFVPGSNAAMLSNSFIYKPDSIMFDLEDAVALKEKDSARLLVAHALQHPLYKEIETVVRVNPLDSEFGLLDLNSVVRAGVDVVRMPKTESAQDVLDMDHAITEIEKACGREAGSTKMLAAIESPLGITQANQIAFASKRLIGIALGAEDYVRNLKTERSPEGIELLFARCSILQAARAAGIQAFDTVYSNANNEEGFLKEAALIKQLGFDGKSLINPRQIELLHNLFAPTQKDVEQAKRIIEAAVEAERQGAGVVSLNGKMIDAPIIDRAKLVLERAKSGIREE.

2 residues coordinate substrate: Arg66 and Glu129. Residues Glu129 and Asp156 each contribute to the Mg(2+) site.

The protein belongs to the HpcH/HpaI aldolase family. Citrate lyase beta subunit subfamily. In terms of assembly, oligomer with a subunit composition of (alpha,beta,gamma)6. Mg(2+) is required as a cofactor.

The protein localises to the cytoplasm. The catalysed reaction is citrate = oxaloacetate + acetate. The enzyme catalyses (3S)-citryl-CoA = oxaloacetate + acetyl-CoA. In terms of biological role, represents a citryl-ACP lyase. This chain is Citrate lyase subunit beta (citE), found in Haemophilus influenzae (strain ATCC 51907 / DSM 11121 / KW20 / Rd).